Here is a 449-residue protein sequence, read N- to C-terminus: Protein tweety homolog 1 (449 aa).

Over 1 to 43 the chain is Extracellular; sequence MSSSHGYRASWWTYILHQVPHTNFQFEVVDNQFAPQEWPYQQA. Residues 44–64 form a helical membrane-spanning segment; the sequence is LLFLASIAGLCLAISLILICV. The Cytoplasmic segment spans residues 65–86; the sequence is YLIRFCCCSSQEDDDSKSHRVC. Residues 87-107 traverse the membrane as a helical segment; it reads CVTWSCVAAVIICCAGIGIGF. The Extracellular portion of the chain corresponds to 108-212; that stretch reads YGNSETNDGV…QVNFIEDYRW (105 aa). Residue asparagine 128 is glycosylated (N-linked (GlcNAc...) asparagine). A helical membrane pass occupies residues 213 to 233; it reads LAYILLLLLDLIICLFTLLGL. At 234-238 the chain is on the cytoplasmic side; that stretch reads AKQIK. A helical membrane pass occupies residues 239-259; that stretch reads WLVIVMTVVSFFVLLLSWGSM. At 260-388 the chain is on the extracellular side; that stretch reads GLEMATAVGL…LKGLCYDGME (129 aa). 2 disulfides stabilise this stretch: cysteine 273-cysteine 383 and cysteine 301-cysteine 368. Residues asparagine 282 and asparagine 353 are each glycosylated (N-linked (GlcNAc...) asparagine). Residues 389–409 traverse the membrane as a helical segment; that stretch reads GILFLLLFSFLSALSFTAAIC. At 410 to 449 the chain is on the cytoplasmic side; the sequence is SLPRAWKRFQNRDLDYDDMDEDDPFNPQESKRFVQWQSSI.

It belongs to the tweety family. As to quaternary structure, homotetramer; disulfide-linked. Homodimer.

Its subcellular location is the cell membrane. The enzyme catalyses chloride(in) = chloride(out). The catalysed reaction is L-glutamate(out) = L-glutamate(in). Its function is as follows. May act as a calcium-independent, swelling-dependent volume-regulated anion channel (VRAC-swell) which plays a pivotal role in the process of regulatory volume decrease (RVD) in the brain through the efflux of anions like chloride and organic osmolytes like glutamate. The polypeptide is Protein tweety homolog 1 (ttyh1) (Xenopus tropicalis (Western clawed frog)).